Consider the following 148-residue polypeptide: Large ribosomal subunit protein bL9 (148 aa).

The protein belongs to the bacterial ribosomal protein bL9 family.

In terms of biological role, binds to the 23S rRNA. The chain is Large ribosomal subunit protein bL9 from Frankia alni (strain DSM 45986 / CECT 9034 / ACN14a).